The primary structure comprises 183 residues: Probable actin-related protein 2/3 complex subunit 3 (183 aa).

Belongs to the ARPC3 family. Component of the Arp2/3 complex.

Its subcellular location is the cytoplasm. The protein resides in the cytoskeleton. In terms of biological role, functions as a component of the Arp2/3 complex which is involved in regulation of actin polymerization and together with an activating nucleation-promoting factor (NPF) mediates the formation of branched actin networks. The sequence is that of Probable actin-related protein 2/3 complex subunit 3 (arx-5) from Caenorhabditis elegans.